A 148-amino-acid polypeptide reads, in one-letter code: Pivalyl-CoA mutase small subunit (148 aa).

Positions 8–138 constitute a B12-binding domain; the sequence is PLRVLVTKIG…TALGQKSRAE (131 aa). Adenosylcob(III)alamin is bound at residue His21.

This sequence belongs to the acyl-CoA mutase small subunit family. Monomer in the absence of the PCM large subunit. Weakly interacts with the PCM large subunit; an alpha(2)beta(2) stoichiometry seems to represent the active state of the enzyme. Adenosylcob(III)alamin is required as a cofactor.

The enzyme catalyses 3-methylbutanoyl-CoA = 2,2-dimethylpropanoyl-CoA. Together with Xaut_5043, catalyzes the reversible isomerization between pivalyl-CoA and isovaleryl-CoA, using radical chemistry. Does not exhibit isobutyryl-CoA mutase (ICM) activity. The sequence is that of Pivalyl-CoA mutase small subunit from Xanthobacter autotrophicus (strain ATCC BAA-1158 / Py2).